Reading from the N-terminus, the 416-residue chain is MFSVFEEITRIVVKEMDAGGDMIAVRSLVDADRFRCFHLVGEKRTFFGCRHYTTGLTLMDILDTDGDKWLDELDSGLQGQKAEFQILDNVDSTGELIVRLPKEITISGSFQGFHHQKIKISENRISQQYLATLENRKLKRELPFSFRSINTRENLYLVTETLETVKEETLKSDRQYKFWSQISQGHLSYKHKGQREVTIPPNRVLSYRVKQLVFPNKETMNIHFRGKTKSFPEEKDGASSCLGKSLGSEDSRNMKEKLEDMESVLKDLTEEKRKDVLNSLAKCLGKEDIRQDLEQRVSEVLISGELHMEDPDKPLLSSLFNAAGVLVEARAKAILDFLDALLELSEEQQFVAEALEKGTLPLLKDQVKSVMEQNWDELASSPPDMDYDPEARILCALYVVVSILLELAEGPTSVSS.

Positions 1 to 280 are triggers pyroptosis; that stretch reads MFSVFEEITR…EKRKDVLNSL (280 aa). A run of 2 beta stranded transmembrane segments spans residues 83-101 and 102-125; these read EFQI…VRLP and KEIT…ENRI. (Microbial infection) Glycyl lysine isopeptide (Lys-Gly) (interchain with G-Cter in ubiquitin) cross-links involve residues Lys166, Lys177, Lys190, and Lys192. 2 beta stranded membrane-spanning segments follow: residues 167–183 and 184–198; these read EETL…SQIS and QGHL…REVT. The disordered stretch occupies residues 229–250; it reads KSFPEEKDGASSCLGKSLGSED. Residues 248–276 are a coiled coil; sequence SEDSRNMKEKLEDMESVLKDLTEEKRKDV. Met308 participates in a covalent cross-link: (Microbial infection) Glycyl lysine isopeptide (Lys-Gly) (interchain with G-Cter in ubiquitin).

This sequence belongs to the gasdermin family. Homooligomer; homooligomeric ring-shaped pore complex containing 24-26 subunits when inserted in the membrane. In terms of processing, cleavage by granzyme A (GZMA) relieves autoinhibition by releasing the N-terminal moiety (Gasdermin-B, N-terminal) that initiates pyroptosis. Not cleaved by other granzymes. Major cleavage site takes places after Lys-244; a minor cleavage site takes place after Lys-229. Cleavage by neutrophil elastase ELANE, inhibits its ability to trigger pyroptosis. Palmitoylated. Post-translationally, (Microbial infection) Ubiquitinated by S.flexneri IpaH7.8, leading to its degradation by the proteasome, thereby preventing its ability to form pores in bacterial-derived membranes. In terms of tissue distribution, in the gastrointestinal tract, expressed in proliferating cells, including in the basal cell layer of esophagus and in isthmus/neck of stomach.

The protein resides in the cytoplasm. It localises to the cell membrane. Its activity is regulated as follows. The full-length protein before cleavage is inactive: intramolecular interactions between N- and C-terminal domains mediate autoinhibition in the absence of activation signal. The intrinsic pyroptosis-inducing activity is carried by the released N-terminal moiety (Gasdermin-B, N-terminal) following cleavage by granzyme A (GZMA). Its function is as follows. Precursor of a pore-forming protein that acts as a downstream mediator of granzyme-mediated cell death. This form constitutes the precursor of the pore-forming protein: upon cleavage, the released N-terminal moiety (Gasdermin-B, N-terminal) binds to membranes and forms pores, triggering pyroptosis. Also acts as a regulator of epithelial cell repair independently of programmed cell death: translocates to the plasma membrane and promotes epithelial maintenance and repair by regulating PTK2/FAK-mediated phosphorylation of PDGFA. In terms of biological role, pore-forming protein produced by cleavage by granzyme A (GZMA), which causes membrane permeabilization and pyroptosis in target cells of cytotoxic T and natural killer (NK) cells. Key downstream mediator of granzyme-mediated cell death: (1) granzyme A (GZMA), delivered to target cells from cytotoxic T- and NK-cells, (2) specifically cleaves Gasdermin-B to generate this form. After cleavage, moves to the plasma membrane, homooligomerizes within the membrane and forms pores of 10-15 nanometers (nm) of inner diameter, triggering pyroptosis. The different isoforms recognize and bind different phospholipids on membranes, promoting cell death of different target cells. Functionally, precursor of a pore-forming protein that acts as a downstream mediator of granzyme-mediated cell death and mediates pyroptosis. Following cleavage and activation by granzyme A (GZMA), the N-terminal part binds to membrane inner leaflet lipids, homooligomerizes within the human plasma membrane and forms pores of 10-15 nanometers (nm) of inner diameter, triggering pyroptosis. Recognizes and binds membrane inner leaflet lipids of human cells, such as phosphatidylinositol 4-phosphate, phosphatidylinositol 5-phosphate, bisphosphorylated phosphatidylinositols, such as phosphatidylinositol (4,5)-bisphosphate, and more weakly to phosphatidic acid. Also binds sufatide, a component of the apical membrane of epithelial cells. Precursor of a pore-forming protein that acts as a downstream mediator of granzyme-mediated cell death and mediates pyroptosis of human cells. Following cleavage and activation by granzyme A (GZMA), the N-terminal part binds to membrane inner leaflet lipids, homooligomerizes within the human plasma membrane and forms pores of 10-15 nanometers (nm) of inner diameter, triggering pyroptosis. Its function is as follows. Precursor of a pore-forming protein that acts as a downstream mediator of granzyme-mediated cell death and specifically mediates cell death of Gram-negative bacteria in response to infection. Following cleavage and activation by granzyme A (GZMA), the N-terminal part recognizes and binds phospholipids found on Gram-negative bacterial membranes, such as lipid A and cariolipin, homooligomerizes within the bacterial membranes and forms pores, triggering pyroptosis followed by cell death. In contrast to isoform 4, does not bind to membrane inner leaflet lipids of host human cell, such as phosphatidylinositol 4-phosphate, phosphatidylinositol 5-phosphate, bisphosphorylated phosphatidylinositols, such as phosphatidylinositol (4,5)-bisphosphate. In terms of biological role, not able to trigger pyroptosis. This Homo sapiens (Human) protein is Gasdermin-B.